We begin with the raw amino-acid sequence, 467 residues long: Protein indeterminate-domain 6, chloroplastic (467 aa).

The transit peptide at 1–20 directs the protein to the chloroplast; it reads MSSSYNTIALSSTPTFLLSS. Positions 38 to 65 are disordered; it reads TMVQQQPTSSVAPPPKKRRNQPGNPNPD. A compositionally biased stretch (polar residues) spans 39–48; sequence MVQQQPTSSV. At serine 72 the chain carries Phosphoserine. C2H2-type zinc fingers lie at residues 82 to 104 and 123 to 153; these read FLCE…RRGH and YLCP…YRKH. The C2H2-type 2; degenerate zinc finger occupies 158–181; that stretch reads WKCDKCSKRYAVQSDWKAHSKTCG. 8 residues coordinate Zn(2+): cysteine 160, cysteine 163, histidine 176, cysteine 180, cysteine 187, cysteine 189, histidine 202, and cysteine 206. The CCHC-type 2; atypical zinc finger occupies 185-208; that stretch reads YRCDCGTIFSRRDSYITHRAFCDA. Positions 195-207 are SHR-binding; the sequence is RRDSYITHRAFCD. The segment at 440–467 is disordered; sequence NGRGGRSGGPPLDAEMKFSHPNHPYGKA.

The protein localises to the plastid. Its subcellular location is the chloroplast. In terms of biological role, probable transcription factor. This Arabidopsis thaliana (Mouse-ear cress) protein is Protein indeterminate-domain 6, chloroplastic.